We begin with the raw amino-acid sequence, 129 residues long: Cytochrome c oxidase subunit 5B, mitochondrial (129 aa).

Residues 1-31 (MASRLLRGVGALASQALRARGPNGVSVVRSM) constitute a mitochondrion transit peptide. N6-acetyllysine occurs at positions 68 and 86. Residues Cys-91, Cys-93, Cys-113, and Cys-116 each contribute to the Zn(2+) site. Residue Lys-121 is modified to N6-acetyllysine.

The protein belongs to the cytochrome c oxidase subunit 5B family. As to quaternary structure, component of the cytochrome c oxidase (complex IV, CIV), a multisubunit enzyme composed of 14 subunits. The complex is composed of a catalytic core of 3 subunits MT-CO1, MT-CO2 and MT-CO3, encoded in the mitochondrial DNA, and 11 supernumerary subunits COX4I1 (or COX4I2), COX5A, COX5B, COX6A2 (or COX6A1), COX6B1 (or COX6B2), COX6C, COX7A1 (or COX7A2), COX7B, COX7C, COX8B and NDUFA4, which are encoded in the nuclear genome. The complex exists as a monomer or a dimer and forms supercomplexes (SCs) in the inner mitochondrial membrane with NADH-ubiquinone oxidoreductase (complex I, CI) and ubiquinol-cytochrome c oxidoreductase (cytochrome b-c1 complex, complex III, CIII), resulting in different assemblies (supercomplex SCI(1)III(2)IV(1) and megacomplex MCI(2)III(2)IV(2)).

It is found in the mitochondrion inner membrane. Its pathway is energy metabolism; oxidative phosphorylation. Component of the cytochrome c oxidase, the last enzyme in the mitochondrial electron transport chain which drives oxidative phosphorylation. The respiratory chain contains 3 multisubunit complexes succinate dehydrogenase (complex II, CII), ubiquinol-cytochrome c oxidoreductase (cytochrome b-c1 complex, complex III, CIII) and cytochrome c oxidase (complex IV, CIV), that cooperate to transfer electrons derived from NADH and succinate to molecular oxygen, creating an electrochemical gradient over the inner membrane that drives transmembrane transport and the ATP synthase. Cytochrome c oxidase is the component of the respiratory chain that catalyzes the reduction of oxygen to water. Electrons originating from reduced cytochrome c in the intermembrane space (IMS) are transferred via the dinuclear copper A center (CU(A)) of subunit 2 and heme A of subunit 1 to the active site in subunit 1, a binuclear center (BNC) formed by heme A3 and copper B (CU(B)). The BNC reduces molecular oxygen to 2 water molecules using 4 electrons from cytochrome c in the IMS and 4 protons from the mitochondrial matrix. The chain is Cytochrome c oxidase subunit 5B, mitochondrial (COX5B) from Bos taurus (Bovine).